The following is a 155-amino-acid chain: 3-dehydroquinate dehydratase 1 (155 aa).

Tyr28 acts as the Proton acceptor in catalysis. Substrate-binding residues include Asn80, His86, and Asp93. Residue His106 is the Proton donor of the active site. Substrate-binding positions include 107–108 (VT) and Arg117.

It belongs to the type-II 3-dehydroquinase family. Homododecamer.

It catalyses the reaction 3-dehydroquinate = 3-dehydroshikimate + H2O. The protein operates within metabolic intermediate biosynthesis; chorismate biosynthesis; chorismate from D-erythrose 4-phosphate and phosphoenolpyruvate: step 3/7. In terms of biological role, catalyzes a trans-dehydration via an enolate intermediate. The chain is 3-dehydroquinate dehydratase 1 (aroQ1) from Bradyrhizobium diazoefficiens (strain JCM 10833 / BCRC 13528 / IAM 13628 / NBRC 14792 / USDA 110).